Here is a 276-residue protein sequence, read N- to C-terminus: Merozoite surface protein 2 (276 aa).

An N-terminal signal peptide occupies residues 1–20 (MKVIKTLSIINFFIFVTFNI). Asparagine 22 and asparagine 36 each carry an N-linked (GlcNAc...) asparagine glycan. Residues 44 to 202 (AESNPSTGAG…EQTESPELQS (159 aa)) form a polymorphic region region. Residues 44 to 242 (AESNPSTGAG…CTDGNKENCG (199 aa)) are disordered. Residues 51-90 (GAGGSGSAGGSGSAGGSGSAGGSGSAGGSGSAGSGDGNGA) show a composition bias toward gly residues. 5 tandem repeats follow at residues 53-58 (GGSGSA), 59-64 (GGSGSA), 65-70 (GGSGSA), 71-76 (GGSGSA), and 77-82 (GGSGSA). Residues 53-82 (GGSGSAGGSGSAGGSGSAGGSGSAGGSGSA) form a 5 X 6 AA tandem repeats of G-G-S-G-S-A region. Residues 91–127 (NPGADAERSPSTPATTTTTTTTNDAEASTSTSSENPN) are compositionally biased toward low complexity. 3 stretches are compositionally biased toward polar residues: residues 143–169 (KPNQANKETQNNSNVQQDSQTKSNVPP), 176–187 (KSPTAQPEQAEN), and 194–204 (QTESPELQSAP). The N-linked (GlcNAc...) asparagine glycan is linked to asparagine 153. N-linked (GlcNAc...) asparagine glycosylation is present at asparagine 225. Residues 229–238 (SQKECTDGNK) show a composition bias toward basic and acidic residues. A disulfide bond links cysteine 233 and cysteine 241. Asparagine 250 carries an N-linked (GlcNAc...) asparagine glycan. Asparagine 250 carries GPI-anchor amidated asparagine lipidation. The propeptide at 251-276 (SSNIASINKFVVLISATLVLSFAIFI) is removed in mature form.

The protein resides in the cell membrane. May play a role in the merozoite attachment to the erythrocyte. In Plasmodium falciparum (isolate 7G8), this protein is Merozoite surface protein 2.